The chain runs to 263 residues: tRNA (guanine-N(1)-)-methyltransferase (263 aa).

S-adenosyl-L-methionine-binding positions include Gly-124 and 144 to 149 (LGDFVL).

The protein belongs to the RNA methyltransferase TrmD family. Homodimer.

The protein localises to the cytoplasm. It catalyses the reaction guanosine(37) in tRNA + S-adenosyl-L-methionine = N(1)-methylguanosine(37) in tRNA + S-adenosyl-L-homocysteine + H(+). Functionally, specifically methylates guanosine-37 in various tRNAs. The polypeptide is tRNA (guanine-N(1)-)-methyltransferase (Aromatoleum aromaticum (strain DSM 19018 / LMG 30748 / EbN1) (Azoarcus sp. (strain EbN1))).